Here is a 187-residue protein sequence, read N- to C-terminus: UPF0340 protein SP_0663 (187 aa).

This sequence belongs to the UPF0340 family.

The polypeptide is UPF0340 protein SP_0663 (Streptococcus pneumoniae serotype 4 (strain ATCC BAA-334 / TIGR4)).